A 51-amino-acid polypeptide reads, in one-letter code: Magnetosome protein Mms5 (51 aa).

Residues 1 to 8 (MLSAKGVS) are Lumenal-facing. The segment at 9 to 16 (LGLGLGLG) is LG region. Residues 9–29 (LGLGLGLGAWGPVLLGVVGVA) traverse the membrane as a helical segment. Residues 30 to 51 (GALALYGYYKNRNAEPAAAEAV) are Cytoplasmic-facing.

This sequence belongs to the magnetosome MamD/Mms5 family. In terms of processing, may undergo N-terminal cleavage.

The protein localises to the magnetosome membrane. Functionally, might be involved in magnetite crystal growth. The polypeptide is Magnetosome protein Mms5 (Magnetospirillum gryphiswaldense (strain DSM 6361 / JCM 21280 / NBRC 15271 / MSR-1)).